The primary structure comprises 122 residues: Ribonuclease P protein component (122 aa).

Belongs to the RnpA family. In terms of assembly, consists of a catalytic RNA component (M1 or rnpB) and a protein subunit.

The enzyme catalyses Endonucleolytic cleavage of RNA, removing 5'-extranucleotides from tRNA precursor.. Functionally, RNaseP catalyzes the removal of the 5'-leader sequence from pre-tRNA to produce the mature 5'-terminus. It can also cleave other RNA substrates such as 4.5S RNA. The protein component plays an auxiliary but essential role in vivo by binding to the 5'-leader sequence and broadening the substrate specificity of the ribozyme. The sequence is that of Ribonuclease P protein component from Lactobacillus gasseri (strain ATCC 33323 / DSM 20243 / BCRC 14619 / CIP 102991 / JCM 1131 / KCTC 3163 / NCIMB 11718 / NCTC 13722 / AM63).